A 243-amino-acid chain; its full sequence is Venom nerve growth factor 5 (243 aa).

The N-terminal stretch at 1–18 (MSMLCYTLIIAFLIGIWA) is a signal peptide. Residues 19-125 (APKSEDNVPL…TLNRNIRTKR (107 aa)) constitute a propeptide that is removed on maturation. Residues 47 to 66 (GLKTSRNTDQRHPAPKKAED) are compositionally biased toward basic and acidic residues. The interval 47 to 67 (GLKTSRNTDQRHPAPKKAEDQ) is disordered. 3 cysteine pairs are disulfide-bonded: Cys139–Cys204, Cys182–Cys232, and Cys192–Cys234. Asn148 carries an N-linked (GlcNAc...) asparagine glycan.

It belongs to the NGF-beta family. As to quaternary structure, homodimer; non-covalently linked. Expressed by the venom gland.

The protein localises to the secreted. Functionally, nerve growth factor is important for the development and maintenance of the sympathetic and sensory nervous systems. It stimulates division and differentiation of sympathetic and embryonic sensory neurons as well as basal forebrain cholinergic neurons in the brain. Its relevance in the snake venom is not clear. However, it has been shown to inhibit metalloproteinase-dependent proteolysis of platelet glycoprotein Ib alpha, suggesting a metalloproteinase inhibition to prevent metalloprotease autodigestion and/or protection against prey proteases. Binds a lipid between the two protein chains in the homodimer. The lipid-bound form promotes histamine relase from mouse mast cells, contrary to the lipid-free form. This chain is Venom nerve growth factor 5, found in Tropidechis carinatus (Australian rough-scaled snake).